A 131-amino-acid chain; its full sequence is MSWQAYVDEHLMCEIEGHHLTSAAIVGHDGAVWAQSTAFPQFKTEEMTNIMKDFDEPGFLAPTGLFLGPTKYMVIQGEPGAVIRGKKGSGGITVKKTGQALVIGIYDEPMTPGQCNMVVERLGDYLLEQGL.

Cysteine 13 and cysteine 115 form a disulfide bridge. The short motif at 81-97 (AVIRGKKGSGGITVKKT) is the Involved in PIP2 interaction element. Residue threonine 111 is modified to Phosphothreonine.

The protein belongs to the profilin family. In terms of assembly, occurs in many kinds of cells as a complex with monomeric actin in a 1:1 ratio. Phosphorylated by MAP kinases.

The protein localises to the cytoplasm. The protein resides in the cytoskeleton. Functionally, binds to actin and affects the structure of the cytoskeleton. At high concentrations, profilin prevents the polymerization of actin, whereas it enhances it at low concentrations. In Zea mays (Maize), this protein is Profilin-10.